A 428-amino-acid chain; its full sequence is Elongation factor 1-alpha (428 aa).

Residues 5–225 (KPILNVAFIG…DAFQPPEKPT (221 aa)) form the tr-type G domain. The tract at residues 14-21 (GHVDAGKS) is G1. A GTP-binding site is contributed by 14–21 (GHVDAGKS). S21 is a binding site for Mg(2+). Residues 70 to 74 (GVTID) form a G2 region. The interval 91–94 (DCPG) is G3. Residues 91–95 (DCPGH) and 149–152 (NKMD) contribute to the GTP site. The interval 149 to 152 (NKMD) is G4. Positions 189–191 (ASL) are G5.

The protein belongs to the TRAFAC class translation factor GTPase superfamily. Classic translation factor GTPase family. EF-Tu/EF-1A subfamily.

Its subcellular location is the cytoplasm. The enzyme catalyses GTP + H2O = GDP + phosphate + H(+). GTP hydrolase that promotes the GTP-dependent binding of aminoacyl-tRNA to the A-site of ribosomes during protein biosynthesis. The polypeptide is Elongation factor 1-alpha (Methanococcus maripaludis (strain C7 / ATCC BAA-1331)).